Here is a 59-residue protein sequence, read N- to C-terminus: MVGFSSCRVGFSPPTNNREIFWWAKAHPTLSTHHSMRTSFYFRSNHYDDFMQKDSRTYT.

This is an uncharacterized protein from Haemophilus influenzae (strain ATCC 51907 / DSM 11121 / KW20 / Rd).